The following is a 205-amino-acid chain: Recombination protein RecR (205 aa).

The segment at 60-75 (CKVCHNISDTETCRIC) adopts a C4-type zinc-finger fold. A Toprim domain is found at 83–178 (STICVVESIR…KLSVIARGIS (96 aa)).

It belongs to the RecR family.

May play a role in DNA repair. It seems to be involved in an RecBC-independent recombinational process of DNA repair. It may act with RecF and RecO. The chain is Recombination protein RecR from Phocaeicola vulgatus (strain ATCC 8482 / DSM 1447 / JCM 5826 / CCUG 4940 / NBRC 14291 / NCTC 11154) (Bacteroides vulgatus).